A 156-amino-acid polypeptide reads, in one-letter code: Ribosome-binding factor A (156 aa).

Positions 124–156 (TRAEYAGEAQPYRLEEEPEGSGDEVPPPGGDQR) are disordered.

This sequence belongs to the RbfA family. As to quaternary structure, monomer. Binds 30S ribosomal subunits, but not 50S ribosomal subunits or 70S ribosomes.

The protein localises to the cytoplasm. Its function is as follows. One of several proteins that assist in the late maturation steps of the functional core of the 30S ribosomal subunit. Associates with free 30S ribosomal subunits (but not with 30S subunits that are part of 70S ribosomes or polysomes). Required for efficient processing of 16S rRNA. May interact with the 5'-terminal helix region of 16S rRNA. This is Ribosome-binding factor A from Salinispora tropica (strain ATCC BAA-916 / DSM 44818 / JCM 13857 / NBRC 105044 / CNB-440).